We begin with the raw amino-acid sequence, 711 residues long: Polyribonucleotide nucleotidyltransferase (711 aa).

Residues D490 and D496 each coordinate Mg(2+). Positions 557–616 constitute a KH domain; sequence PRIETMQIPTDKIREVIGSGGKVIREIVETSGAKVDINDDGIIKIASANGEAIKKAYEMI. In terms of domain architecture, S1 motif spans 626 to 694; the sequence is GKVYTGTVVK…DRGKVRLSMK (69 aa).

It belongs to the polyribonucleotide nucleotidyltransferase family. Requires Mg(2+) as cofactor.

The protein resides in the cytoplasm. It carries out the reaction RNA(n+1) + phosphate = RNA(n) + a ribonucleoside 5'-diphosphate. Its function is as follows. Involved in mRNA degradation. Catalyzes the phosphorolysis of single-stranded polyribonucleotides processively in the 3'- to 5'-direction. This chain is Polyribonucleotide nucleotidyltransferase, found in Dinoroseobacter shibae (strain DSM 16493 / NCIMB 14021 / DFL 12).